The sequence spans 211 residues: MHRRITGKLVIATHNPGKLAEMKELLAPYGIEAVSAGELGLSEPDETGNDFRSNAAIKAIAAAHASKLPSFADDSGIVVDALDGAPGIYSARWAGPTKDFTAAMTRIERLLQERGATAPDKRKAHFVSALCVAWPDDHLEEVEARVDGTLVWPPRGTAGFGYDPMFRPDGHTRTFGEMTSIEKHGLPPLGLALSHRARAFVKLAEICLEPR.

13–18 contributes to the substrate binding site; sequence THNPGK. The Mg(2+) site is built by aspartate 45 and aspartate 74. The Proton acceptor role is filled by aspartate 74. Substrate-binding positions include serine 75, 160-163, lysine 183, and 195-196; these read FGYD and HR.

This sequence belongs to the HAM1 NTPase family. Homodimer. Requires Mg(2+) as cofactor.

It catalyses the reaction XTP + H2O = XMP + diphosphate + H(+). The catalysed reaction is dITP + H2O = dIMP + diphosphate + H(+). The enzyme catalyses ITP + H2O = IMP + diphosphate + H(+). Pyrophosphatase that catalyzes the hydrolysis of nucleoside triphosphates to their monophosphate derivatives, with a high preference for the non-canonical purine nucleotides XTP (xanthosine triphosphate), dITP (deoxyinosine triphosphate) and ITP. Seems to function as a house-cleaning enzyme that removes non-canonical purine nucleotides from the nucleotide pool, thus preventing their incorporation into DNA/RNA and avoiding chromosomal lesions. This Bradyrhizobium diazoefficiens (strain JCM 10833 / BCRC 13528 / IAM 13628 / NBRC 14792 / USDA 110) protein is dITP/XTP pyrophosphatase.